Reading from the N-terminus, the 91-residue chain is Late embryogenesis abundant protein EMB564 (91 aa).

Basic and acidic residues-rich tracts occupy residues 1 to 19 (MASGQESRKELDRKAREGE) and 32 to 51 (EAQEHLAEGRSRGGQTRREQ). The interval 1–91 (MASGQESRKE…VTIDESKFTK (91 aa)) is disordered.

It belongs to the small hydrophilic plant seed protein family.

Its function is as follows. LEA proteins are late embryonic proteins abundant in higher plant seed embryos. They may play an essential role in seed survival and in controlling water exchanges during seed desiccation and imbibition. The chain is Late embryogenesis abundant protein EMB564 from Zea mays (Maize).